The chain runs to 151 residues: C-C motif chemokine 25 (151 aa).

Positions 1-22 (MNLWLLVCLVASLMGAWSTVHT) are cleaved as a signal peptide. 2 disulfides stabilise this stretch: Cys29–Cys57 and Cys30–Cys73. Residues 94–151 (THSKQHLGSRRNLQDSHLGGQRSNTGMSRLAHSKSKSSRSTRSNKKKTSFLNMANPGP) form a disordered region. A compositionally biased stretch (basic residues) spans 124–141 (AHSKSKSSRSTRSNKKKT).

This sequence belongs to the intercrine beta (chemokine CC) family.

The protein resides in the secreted. Potentially involved in T-cell development. Recombinant protein shows chemotactic activity on thymocytes, macrophages, THP-1 cells, and dendritics cells but is inactive on peripheral blood lymphocytes and neutrophils. Binds to CCR9. Binds to atypical chemokine receptor ACKR4 and mediates the recruitment of beta-arrestin (ARRB1/2) to ACKR4. The protein is C-C motif chemokine 25 (CCL25) of Canis lupus familiaris (Dog).